A 256-amino-acid polypeptide reads, in one-letter code: NAD-dependent protein deacylase 4 (256 aa).

Positions 1 to 250 constitute a Deacetylase sirtuin-type domain; sequence MRLPAEALKD…AKIHESLSTG (250 aa). 19-39 provides a ligand contact to NAD(+); the sequence is GAGISAESGILTYLDQMPKLW. Substrate contacts are provided by Tyr-64 and Arg-67. 98–101 provides a ligand contact to NAD(+); sequence QNVD. His-116 (proton acceptor) is an active-site residue. Zn(2+)-binding residues include Cys-124, Cys-127, Cys-152, and Cys-155. NAD(+)-binding positions include 192-194, 218-220, and Ala-236; these read GTS and NTV.

Belongs to the sirtuin family. Class III subfamily. The cofactor is Zn(2+).

It is found in the cytoplasm. It catalyses the reaction N(6)-acetyl-L-lysyl-[protein] + NAD(+) + H2O = 2''-O-acetyl-ADP-D-ribose + nicotinamide + L-lysyl-[protein]. The enzyme catalyses N(6)-succinyl-L-lysyl-[protein] + NAD(+) + H2O = 2''-O-succinyl-ADP-D-ribose + nicotinamide + L-lysyl-[protein]. In terms of biological role, NAD-dependent lysine deacetylase and desuccinylase that specifically removes acetyl and succinyl groups on target proteins. Modulates the activities of several proteins which are inactive in their acylated form. This is NAD-dependent protein deacylase 4 from Pseudomonas syringae pv. tomato (strain ATCC BAA-871 / DC3000).